Here is a 491-residue protein sequence, read N- to C-terminus: Glutamyl-tRNA(Gln) amidotransferase subunit A (491 aa).

Active-site charge relay system residues include Lys80 and Ser155. Ser179 serves as the catalytic Acyl-ester intermediate.

Belongs to the amidase family. GatA subfamily. Heterotrimer of A, B and C subunits.

It catalyses the reaction L-glutamyl-tRNA(Gln) + L-glutamine + ATP + H2O = L-glutaminyl-tRNA(Gln) + L-glutamate + ADP + phosphate + H(+). Functionally, allows the formation of correctly charged Gln-tRNA(Gln) through the transamidation of misacylated Glu-tRNA(Gln) in organisms which lack glutaminyl-tRNA synthetase. The reaction takes place in the presence of glutamine and ATP through an activated gamma-phospho-Glu-tRNA(Gln). The polypeptide is Glutamyl-tRNA(Gln) amidotransferase subunit A (Salinispora arenicola (strain CNS-205)).